Here is a 768-residue protein sequence, read N- to C-terminus: ATP-dependent zinc metalloprotease FtsH (768 aa).

The Cytoplasmic segment spans residues 1 to 33; that stretch reads MADRDKNDIRKRLEELRKDNNRRNNRQDNGNRS. Residues 34–54 traverse the membrane as a helical segment; that stretch reads PFSGFLFFIFVILLFTFTLLF. Residues 55-139 are Periplasmic-facing; it reads HRDIQTYFQE…KLNSLQPSGG (85 aa). The helical transmembrane segment at 140–160 threads the bilayer; sequence GFFLLLLGQFLPMIIMIGLMV. The Cytoplasmic portion of the chain corresponds to 161–768; it reads YLAKKMVGGS…SNFKLPSFME (608 aa). 238–245 contributes to the ATP binding site; the sequence is GRPGTGKT. A Zn(2+)-binding site is contributed by histidine 461. The active site involves glutamate 462. Residues histidine 465 and aspartate 536 each coordinate Zn(2+). A disordered region spans residues 647-768; that stretch reads EESIQKGSEG…SNFKLPSFME (122 aa). Positions 669-698 are enriched in basic and acidic residues; sequence QENKTVEAEVHDSNLKSDTEKLAEAVREIT. The span at 715–731 shows a compositional bias: acidic residues; sequence KDSDDNEKNDDDNENSD.

It in the central section; belongs to the AAA ATPase family. This sequence in the C-terminal section; belongs to the peptidase M41 family. As to quaternary structure, homohexamer. Zn(2+) serves as cofactor.

It is found in the cell inner membrane. Functionally, acts as a processive, ATP-dependent zinc metallopeptidase for both cytoplasmic and membrane proteins. Plays a role in the quality control of integral membrane proteins. This is ATP-dependent zinc metalloprotease FtsH from Leptotrichia buccalis (strain ATCC 14201 / DSM 1135 / JCM 12969 / NCTC 10249 / C-1013-b).